The primary structure comprises 98 residues: NADH-ubiquinone oxidoreductase chain 4L (98 aa).

3 consecutive transmembrane segments (helical) span residues 1-21 (MSLT…GLLM), 29-49 (SLLC…ITIL), and 61-81 (IILL…LVMV).

This sequence belongs to the complex I subunit 4L family. As to quaternary structure, core subunit of respiratory chain NADH dehydrogenase (Complex I) which is composed of 45 different subunits.

The protein resides in the mitochondrion inner membrane. The catalysed reaction is a ubiquinone + NADH + 5 H(+)(in) = a ubiquinol + NAD(+) + 4 H(+)(out). Its function is as follows. Core subunit of the mitochondrial membrane respiratory chain NADH dehydrogenase (Complex I) which catalyzes electron transfer from NADH through the respiratory chain, using ubiquinone as an electron acceptor. Part of the enzyme membrane arm which is embedded in the lipid bilayer and involved in proton translocation. The chain is NADH-ubiquinone oxidoreductase chain 4L (MT-ND4L) from Artibeus jamaicensis (Jamaican fruit-eating bat).